Here is a 507-residue protein sequence, read N- to C-terminus: MVTLNASSPLTTKSFLPYRHAPRRPISFSPVFAVHSTDPKKSTQSASASVKWSLESWKSKKALQLPDYPDQKDVDSVLQTLSSFPPIVFAGEARKLEDKLGQAAMGQAFMLQGGDCAESFKEFNANNIRDTFRVLLQMGVVLMFGGQLPVIKVGRMAGQFAKPRSDPFEEKDGVKLPSYRGDNINGDAFDEKSRIPDPHRMVRAYTQSVATLNLLRAFATGGYAAMQRVSQWNLDFTQHSEQGDRYRELANRVDEALGFMGAAGLTSAHPIMTTTEFWTSHECLLLPYEQALTREDSTSGLYYDCSAHMLWVGERTRQLDGAHVEFLRGIANPLGIKVSDKMVPSELVKLIEILNPQNKPGRITVIVRMGAENMRVKLPNLIRAVRGAGQIVTWVSDPMHGNTIMAPGGLKTRSFDAIRAELRAFFDVHDQEGSFPGGVHLEMTGQNVTECVGGSRTITYNDLSSRYHTHCDPRLNASQSLELAFIIAERLRKRRLGSGNLPSSIGV.

It belongs to the class-II DAHP synthase family.

Its subcellular location is the plastid. It is found in the chloroplast. It catalyses the reaction D-erythrose 4-phosphate + phosphoenolpyruvate + H2O = 7-phospho-2-dehydro-3-deoxy-D-arabino-heptonate + phosphate. It functions in the pathway metabolic intermediate biosynthesis; chorismate biosynthesis; chorismate from D-erythrose 4-phosphate and phosphoenolpyruvate: step 1/7. The sequence is that of Phospho-2-dehydro-3-deoxyheptonate aldolase 2, chloroplastic (DHS2) from Arabidopsis thaliana (Mouse-ear cress).